The chain runs to 251 residues: Pyrroloquinoline-quinone synthase (251 aa).

Belongs to the PqqC family.

The enzyme catalyses 6-(2-amino-2-carboxyethyl)-7,8-dioxo-1,2,3,4,7,8-hexahydroquinoline-2,4-dicarboxylate + 3 O2 = pyrroloquinoline quinone + 2 H2O2 + 2 H2O + H(+). It functions in the pathway cofactor biosynthesis; pyrroloquinoline quinone biosynthesis. Its function is as follows. Ring cyclization and eight-electron oxidation of 3a-(2-amino-2-carboxyethyl)-4,5-dioxo-4,5,6,7,8,9-hexahydroquinoline-7,9-dicarboxylic-acid to PQQ. The chain is Pyrroloquinoline-quinone synthase from Pseudomonas syringae pv. syringae (strain B728a).